The chain runs to 1403 residues: Sushi, nidogen and EGF-like domain-containing protein 1 (1403 aa).

Residues 1-24 (MRLGAAWALLLAAALGLGTRGVRA) form the signal peptide. In terms of domain architecture, NIDO spans 103-258 (AFWADVDNRR…GRWAFRIDDA (156 aa)). EGF-like domains follow at residues 268 to 309 (TTSV…RRCH), 311 to 347 (DVNE…PTCE), and 349 to 385 (AQSP…ATCE). 18 disulfide bridges follow: cysteine 272–cysteine 284, cysteine 278–cysteine 297, cysteine 299–cysteine 308, cysteine 315–cysteine 326, cysteine 320–cysteine 335, cysteine 337–cysteine 346, cysteine 353–cysteine 364, cysteine 358–cysteine 373, cysteine 375–cysteine 384, cysteine 391–cysteine 402, cysteine 396–cysteine 411, cysteine 413–cysteine 422, cysteine 433–cysteine 444, cysteine 438–cysteine 453, cysteine 455–cysteine 464, cysteine 472–cysteine 480, cysteine 474–cysteine 488, and cysteine 490–cysteine 499. N-linked (GlcNAc...) asparagine glycosylation occurs at asparagine 292. An EGF-like 4; calcium-binding domain is found at 387–423 (DVDECSSDPCQNGGSCVDLVGNYSCICVEPFEGPQCE). The N-linked (GlcNAc...) asparagine glycan is linked to asparagine 408. EGF-like domains are found at residues 429–465 (VPSP…LDCR) and 468–500 (ILND…LLCE). Asparagine 484 carries an N-linked (GlcNAc...) asparagine glycan. Asparagine 536 carries N-linked (GlcNAc...) asparagine glycosylation. 4 EGF-like domains span residues 541–577 (LPSP…RHCE), 580–616 (RPHL…RHCE), 619–655 (KPDS…RHCE), and 657–693 (APSP…HRCQ). Disulfide bonds link cysteine 545/cysteine 556, cysteine 550/cysteine 565, cysteine 567/cysteine 576, cysteine 584/cysteine 595, cysteine 589/cysteine 604, cysteine 606/cysteine 615, cysteine 623/cysteine 634, cysteine 628/cysteine 643, cysteine 645/cysteine 654, cysteine 661/cysteine 672, cysteine 666/cysteine 681, cysteine 683/cysteine 692, cysteine 698/cysteine 739, cysteine 724/cysteine 751, cysteine 757/cysteine 768, cysteine 762/cysteine 777, cysteine 779/cysteine 788, cysteine 795/cysteine 806, cysteine 800/cysteine 815, cysteine 817/cysteine 826, cysteine 833/cysteine 844, cysteine 838/cysteine 853, cysteine 855/cysteine 864, cysteine 871/cysteine 882, cysteine 876/cysteine 891, and cysteine 893/cysteine 902. The region spanning 696 to 753 (VDCGHPEEVEHATMRFNGTHVGSVALYTCEPGFSLSALSHIRVCQPQGVWSQPPQCIE) is the Sushi domain. Residue asparagine 712 is glycosylated (N-linked (GlcNAc...) asparagine). Positions 753–789 (EVDECRSQPCLHGGSCQDLIADYQCLCSPGYEGVHCE) constitute an EGF-like 11; calcium-binding domain. One can recognise an EGF-like 12; calcium-binding domain in the interval 791 to 827 (ETDECQAQPCRNGGSCRDLPRAFICQCPEGFVGIHCE). EGF-like domains are found at residues 829–865 (EVDA…YNCE) and 867–903 (VSDP…KDCT). Residue asparagine 886 is glycosylated (N-linked (GlcNAc...) asparagine). Fibronectin type-III domains are found at residues 908 to 1006 (PPTA…TRPR), 1007 to 1105 (PIED…TRPL), and 1106 to 1200 (PPAN…SPRD). N-linked (GlcNAc...) asparagine glycosylation is found at asparagine 977, asparagine 1015, asparagine 1109, asparagine 1139, and asparagine 1298. One can recognise an EGF-like 15 domain in the interval 1306 to 1342 (TPGSCSEDACQNGGTCVPGADAHSCDCRPGFKGRHCE). Cystine bridges form between cysteine 1310–cysteine 1321, cysteine 1315–cysteine 1330, and cysteine 1332–cysteine 1341.

In terms of processing, phosphorylated on serine and threonine residues. N-glycosylated. Expressed in lung.

It is found in the secreted. Its subcellular location is the extracellular space. The protein resides in the extracellular matrix. This Mus musculus (Mouse) protein is Sushi, nidogen and EGF-like domain-containing protein 1.